The chain runs to 244 residues: Prolactin-7D1 (244 aa).

The N-terminal stretch at 1 to 30 (MLPSLIQPCSSGTLLMLLMSNLFLWEKVSS) is a signal peptide. 2 cysteine pairs are disulfide-bonded: Cys99/Cys215 and Cys232/Cys240.

Belongs to the somatotropin/prolactin family.

It is found in the secreted. This chain is Prolactin-7D1 (Prl7d1), found in Mus musculus (Mouse).